We begin with the raw amino-acid sequence, 771 residues long: MYPQGRHPAPHQPGQPGFKFTVAESCDRIKDEFQFLQAQYHSLKVEYDKLANEKTEMQRHYVMYYEMSYGLNIEMHKQTEIAKRLNAILAQIMPFLSQEHQQQVAQAVERAKQVTMTELNAIIGVRGLPNLPLTQQQLQAQHLSHAAHGPPVQLPPHPSGLQPPGIPPVTGSGSGLLALGALGSQAHLPVKDEKNHHDLEHRERESSTNNSVSPSDSLRASEKHRGSSEYSLDPKKRRVEEKDNMSRYDSDGDKSDDLVVDVSNEDPATPRVSPSHSPPENGLDKARALKKDAPNSPASVASSGSTPSSKAKDHPHNDKSSTPGLKSNTPTPRNDAPTPGTSNTPGLRPHPGKPPGMEALTAPALRTPLSIAPPYGTPFMMGHHPEMNGSLTSPGVYPGLHISPQMSAAAAAAYGRTHMPGFDPHPHMRAPVLPASLTSIPGGKPAYSFHVSADGQMQPVPFPPDALIGPGIPRHARQINTLSHGEVVCAVTISNPTRHVYTGGKGCVKIWDISQPGSKSPVSQLDCLNRDNYIRSCKLLPDGRTLIVGGEASTLTIWDLASQTPRIKAELTSSAPACYALAISPDAKVCFSCCSDGNIAVWDLHNQTLVRQFQGHTDGASCIDISHDGTKLWTGGLDNTVRSWDLREGRQLQQHDFTSQIFSLGYCPTGEWLAVGMESSNVEVLHHTKPDKYQLHLHESCVLSLKFAYCGKWFVSTGKDNLLNAWRTPYGASIFQSKESSSVLSCDISADDKYIVTGSGDKKATVYEVIY.

The q domain stretch occupies residues 1 to 141 (MYPQGRHPAP…PLTQQQLQAQ (141 aa)). A compositionally biased stretch (low complexity) spans 137–148 (QLQAQHLSHAAH). 2 disordered regions span residues 137–174 (QLQAQHLSHAAHGPPVQLPPHPSGLQPPGIPPVTGSGS) and 196–360 (HHDL…MEAL). Residues 142 to 209 (HLSHAAHGPP…EHRERESSTN (68 aa)) form a GP domain region. Residues 196–206 (HHDLEHRERES) are compositionally biased toward basic and acidic residues. Positions 207 to 217 (STNNSVSPSDS) are enriched in low complexity. The tract at residues 210-278 (NSVSPSDSLR…TPRVSPSHSP (69 aa)) is ccN domain. Composition is skewed to basic and acidic residues over residues 219–257 (RASEKHRGSSEYSLDPKKRRVEEKDNMSRYDSDGDKSDD) and 282–293 (GLDKARALKKDA). Positions 235-238 (KKRR) match the Nuclear localization signal motif. Residues 279-451 (PENGLDKARA…GGKPAYSFHV (173 aa)) are SP domain. The segment covering 294-309 (PNSPASVASSGSTPSS) has biased composition (low complexity). 2 positions are modified to phosphoserine: Ser-296 and Ser-299. Over residues 310-319 (KAKDHPHNDK) the composition is skewed to basic and acidic residues. Over residues 320–332 (SSTPGLKSNTPTP) the composition is skewed to polar residues. WD repeat units lie at residues 483-521 (SHGEVVCAVTISNPTRHVYTGGKGCVKIWDISQPGSKSP), 529-568 (NRDNYIRSCKLLPDGRTLIVGGEASTLTIWDLASQTPRIK), 573-612 (SSAPACYALAISPDAKVCFSCCSDGNIAVWDLHNQTLVRQ), 615-654 (GHTDGASCIDISHDGTKLWTGGLDNTVRSWDLREGRQLQQ), 656-695 (DFTSQIFSLGYCPTGEWLAVGMESSNVEVLHHTKPDKYQL), 697-736 (LHESCVLSLKFAYCGKWFVSTGKDNLLNAWRTPYGASIFQ), and 738-771 (KESSSVLSCDISADDKYIVTGSGDKKATVYEVIY).

Belongs to the WD repeat Groucho/TLE family. As to expression, at gastrulation, expression is absent within the axial mesoderm. After gastrulation is complete, expressed in the presomitic mesoderm, but expression in the tailbud doesn't begin until the six to seven somite stage, after which it becomes abundant. Expression is abundant throughout somitogenesis within the posterior half of the somites, but is absent from older somites. Also expressed in a dynamic manner within the neural plate.

Its subcellular location is the nucleus. Functionally, transcriptional corepressor that binds to a number of transcription factors. Inhibits the transcriptional activation mediated by CTNNB1 and TCF family members in Wnt signaling. The effects of full-length TLE family members may be modulated by association with dominant-negative AES. This chain is Transducin-like enhancer protein 3-B, found in Danio rerio (Zebrafish).